Consider the following 431-residue polypeptide: 3-isopropylmalate dehydratase large subunit (431 aa).

3 residues coordinate [4Fe-4S] cluster: Cys-308, Cys-368, and Cys-371.

Belongs to the aconitase/IPM isomerase family. LeuC type 2 subfamily. Heterodimer of LeuC and LeuD. Requires [4Fe-4S] cluster as cofactor.

It carries out the reaction (2R,3S)-3-isopropylmalate = (2S)-2-isopropylmalate. It functions in the pathway amino-acid biosynthesis; L-leucine biosynthesis; L-leucine from 3-methyl-2-oxobutanoate: step 2/4. Catalyzes the isomerization between 2-isopropylmalate and 3-isopropylmalate, via the formation of 2-isopropylmaleate. This Desulfosudis oleivorans (strain DSM 6200 / JCM 39069 / Hxd3) (Desulfococcus oleovorans) protein is 3-isopropylmalate dehydratase large subunit.